The primary structure comprises 612 residues: uncharacterized protein (612 aa).

Residues 6–32 (CLYCRRRKIKCDKNRPCHNCFVAKREC) constitute a DNA-binding region (zn(2)-C6 fungal-type).

It is found in the cytoplasm. The protein resides in the nucleus. This is an uncharacterized protein from Schizosaccharomyces pombe (strain 972 / ATCC 24843) (Fission yeast).